The chain runs to 968 residues: Bifunctional glyoxylate cycle protein (968 aa).

An isocitrate lyase region spans residues 1-443 (MSSAAKNFYQ…AVASQDEEIL (443 aa)). Residues 444–968 (SLTAQNVAGD…AYDRLVSEGY (525 aa)) are malate synthase. The active-site Proton acceptor is Arg-601. Asp-881 functions as the Proton donor in the catalytic mechanism.

This sequence in the N-terminal section; belongs to the isocitrate lyase/PEP mutase superfamily. Isocitrate lyase family. The protein in the C-terminal section; belongs to the malate synthase family. In terms of tissue distribution, intestinal and body wall muscle cells.

It catalyses the reaction D-threo-isocitrate = glyoxylate + succinate. It carries out the reaction glyoxylate + acetyl-CoA + H2O = (S)-malate + CoA + H(+). It participates in carbohydrate metabolism; glyoxylate cycle; (S)-malate from isocitrate: step 1/2. The protein operates within carbohydrate metabolism; glyoxylate cycle; (S)-malate from isocitrate: step 2/2. This chain is Bifunctional glyoxylate cycle protein (icl-1), found in Caenorhabditis elegans.